The chain runs to 368 residues: Hydrophobic dipeptide epimerase (368 aa).

Substrate is bound by residues threonine 143 and 168–170 (KIK). 3 residues coordinate Mg(2+): aspartate 197, glutamate 225, and aspartate 253. Substrate-binding positions include lysine 277 and 329–331 (DMD).

The protein belongs to the mandelate racemase/muconate lactonizing enzyme family. It depends on Mg(2+) as a cofactor.

Catalyzes the epimerization of various hydrophobic dipeptides, such as L-Ala-L-Phe. Has epimerase activity with L-Ala-L-Thr, L-Ala-L-Met, L-Ala-L-Tyr, as well as L-Phe-L-Met, L-Phe-L-Ser and L-Phe-L-Thr (in vitro). The protein is Hydrophobic dipeptide epimerase of Citrifermentans bemidjiense (strain ATCC BAA-1014 / DSM 16622 / JCM 12645 / Bem) (Geobacter bemidjiensis).